We begin with the raw amino-acid sequence, 552 residues long: Probable malate:quinone oxidoreductase (552 aa).

A disordered region spans residues 530–552; the sequence is DAKPATPEAKPAQASSPQHDMAL. Polar residues predominate over residues 542–552; that stretch reads QASSPQHDMAL.

This sequence belongs to the MQO family. It depends on FAD as a cofactor.

It carries out the reaction (S)-malate + a quinone = a quinol + oxaloacetate. Its pathway is carbohydrate metabolism; tricarboxylic acid cycle; oxaloacetate from (S)-malate (quinone route): step 1/1. This chain is Probable malate:quinone oxidoreductase, found in Cronobacter sakazakii (strain ATCC BAA-894) (Enterobacter sakazakii).